The sequence spans 99 residues: Integration host factor subunit alpha (99 aa).

Belongs to the bacterial histone-like protein family. In terms of assembly, heterodimer of an alpha and a beta chain.

In terms of biological role, this protein is one of the two subunits of integration host factor, a specific DNA-binding protein that functions in genetic recombination as well as in transcriptional and translational control. This is Integration host factor subunit alpha from Psychrobacter arcticus (strain DSM 17307 / VKM B-2377 / 273-4).